The following is a 323-amino-acid chain: tRNA dimethylallyltransferase (323 aa).

ATP is bound at residue 12-19 (GPTAAGKT). 14-19 (TAAGKT) is a substrate binding site. Interaction with substrate tRNA stretches follow at residues 37–40 (DSAL) and 161–165 (QRLIR).

This sequence belongs to the IPP transferase family. Monomer. It depends on Mg(2+) as a cofactor.

It carries out the reaction adenosine(37) in tRNA + dimethylallyl diphosphate = N(6)-dimethylallyladenosine(37) in tRNA + diphosphate. Its function is as follows. Catalyzes the transfer of a dimethylallyl group onto the adenine at position 37 in tRNAs that read codons beginning with uridine, leading to the formation of N6-(dimethylallyl)adenosine (i(6)A). In Pseudomonas syringae pv. syringae (strain B728a), this protein is tRNA dimethylallyltransferase.